Consider the following 241-residue polypeptide: Nopaline transport system permease protein NocM (241 aa).

The ABC transmembrane type-1 domain maps to 17–215 (VPTTLTLAFI…FITFVVSRLV (199 aa)). 5 helical membrane-spanning segments follow: residues 21-41 (LTLA…VALM), 52-72 (LAYG…MFLI), 95-115 (PWFC…SEII), 161-181 (VMLI…EVTG), and 191-211 (YSPV…TFVV).

Belongs to the binding-protein-dependent transport system permease family. HisMQ subfamily.

The protein localises to the cell inner membrane. In terms of biological role, component of the nopaline active transport system probably consisting of four subunits: Q, M, P and T. This system is also capable of transporting octopine provided that catabolic functions are induced with nopaline. The protein is Nopaline transport system permease protein NocM (nocM) of Agrobacterium fabrum (strain C58 / ATCC 33970) (Agrobacterium tumefaciens (strain C58)).